The sequence spans 168 residues: Dual-action ribosomal maturation protein DarP (168 aa).

It belongs to the DarP family.

It is found in the cytoplasm. Its function is as follows. Member of a network of 50S ribosomal subunit biogenesis factors which assembles along the 30S-50S interface, preventing incorrect 23S rRNA structures from forming. Promotes peptidyl transferase center (PTC) maturation. The protein is Dual-action ribosomal maturation protein DarP of Neisseria meningitidis serogroup B (strain ATCC BAA-335 / MC58).